Reading from the N-terminus, the 486-residue chain is NADH-quinone oxidoreductase subunit N (486 aa).

The next 14 helical transmembrane spans lie at 11-31 (ALPE…DLFV), 44-64 (MLAL…YPVL), 74-94 (PIAS…MIYA), 103-123 (FLKG…CVMV), 128-148 (MLTL…LIAL), 163-183 (FVLG…VYGG), 206-226 (VSLG…AVPF), 238-258 (PTAV…VFVI), 267-287 (PAAV…LVVG), 300-320 (MLAY…LAAT), 328-348 (MFYA…LLAL), 371-391 (YALL…LVGF), 404-424 (VGLT…AFYY), and 452-472 (LVLG…NGLY).

The protein belongs to the complex I subunit 2 family. In terms of assembly, NDH-1 is composed of 14 different subunits. Subunits NuoA, H, J, K, L, M, N constitute the membrane sector of the complex.

The protein resides in the cell inner membrane. The catalysed reaction is a quinone + NADH + 5 H(+)(in) = a quinol + NAD(+) + 4 H(+)(out). In terms of biological role, NDH-1 shuttles electrons from NADH, via FMN and iron-sulfur (Fe-S) centers, to quinones in the respiratory chain. The immediate electron acceptor for the enzyme in this species is believed to be ubiquinone. Couples the redox reaction to proton translocation (for every two electrons transferred, four hydrogen ions are translocated across the cytoplasmic membrane), and thus conserves the redox energy in a proton gradient. The protein is NADH-quinone oxidoreductase subunit N of Laribacter hongkongensis (strain HLHK9).